The primary structure comprises 575 residues: Flagellin A (575 aa).

Repeat copies occupy residues 405–409 (GSGFS), 411–415 (GSGFS), and 447–450 (GSGF).

The protein belongs to the bacterial flagellin family. In terms of assembly, heteromer of flaA and flaB.

The protein resides in the secreted. It is found in the bacterial flagellum. Functionally, flagellin is the subunit protein which polymerizes to form the filaments of bacterial flagella. The chain is Flagellin A (flaA) from Campylobacter jejuni.